The sequence spans 418 residues: tRNA-2-methylthio-N(6)-dimethylallyladenosine synthase (418 aa).

The region spanning 1 to 118 is the MTTase N-terminal domain; that stretch reads MNYLIETIGC…ALKIMNLFRT (118 aa). Residues Cys10, Cys46, Cys80, Cys143, Cys147, and Cys150 each coordinate [4Fe-4S] cluster. The Radical SAM core domain occupies 129–356; sequence IKSKIVRYIT…LKESNKISIE (228 aa). The region spanning 359–418 is the TRAM domain; the sequence is SEMLGSTQQVLAEEIKNGIIKARTKNGRKVFAEGRKEYIGKHINVNIKEAKINSLFGDIV.

The protein belongs to the methylthiotransferase family. MiaB subfamily. Monomer. [4Fe-4S] cluster serves as cofactor.

It is found in the cytoplasm. It carries out the reaction N(6)-dimethylallyladenosine(37) in tRNA + (sulfur carrier)-SH + AH2 + 2 S-adenosyl-L-methionine = 2-methylsulfanyl-N(6)-dimethylallyladenosine(37) in tRNA + (sulfur carrier)-H + 5'-deoxyadenosine + L-methionine + A + S-adenosyl-L-homocysteine + 2 H(+). Catalyzes the methylthiolation of N6-(dimethylallyl)adenosine (i(6)A), leading to the formation of 2-methylthio-N6-(dimethylallyl)adenosine (ms(2)i(6)A) at position 37 in tRNAs that read codons beginning with uridine. In Endomicrobium trichonymphae, this protein is tRNA-2-methylthio-N(6)-dimethylallyladenosine synthase.